We begin with the raw amino-acid sequence, 365 residues long: Probable galacturonosyltransferase-like 10 (365 aa).

Over 1-10 (MMSGSRLASR) the chain is Cytoplasmic. The helical; Signal-anchor for type II membrane protein transmembrane segment at 11-31 (LIIIFSIISTSFFTVESIRLF) threads the bilayer. The Lumenal portion of the chain corresponds to 32-365 (PDSFDDASSD…LQYNQELEIL (334 aa)). N-linked (GlcNAc...) asparagine glycosylation is present at asparagine 209.

It belongs to the glycosyltransferase 8 family.

It localises to the golgi apparatus membrane. Its pathway is glycan metabolism; pectin biosynthesis. May be involved in pectin and/or xylans biosynthesis in cell walls. This Arabidopsis thaliana (Mouse-ear cress) protein is Probable galacturonosyltransferase-like 10 (GATL10).